The chain runs to 397 residues: Elongation factor Tu (397 aa).

The tr-type G domain maps to 10 to 207 (KPHVNVGTIG…ACDSYIPDPQ (198 aa)). The G1 stretch occupies residues 19 to 26 (GHIDHGKT). Residue 19–26 (GHIDHGKT) coordinates GTP. Threonine 26 is a Mg(2+) binding site. The interval 60 to 64 (GITIA) is G2. The segment at 81–84 (DCPG) is G3. Residues 81 to 85 (DCPGH) and 136 to 139 (NKCD) each bind GTP. The segment at 136–139 (NKCD) is G4. The segment at 174 to 176 (SAL) is G5.

Belongs to the TRAFAC class translation factor GTPase superfamily. Classic translation factor GTPase family. EF-Tu/EF-1A subfamily. In terms of assembly, monomer.

The protein resides in the cytoplasm. It catalyses the reaction GTP + H2O = GDP + phosphate + H(+). Functionally, GTP hydrolase that promotes the GTP-dependent binding of aminoacyl-tRNA to the A-site of ribosomes during protein biosynthesis. This chain is Elongation factor Tu, found in Lawsonia intracellularis (strain PHE/MN1-00).